A 488-amino-acid chain; its full sequence is Peptidoglycan endopeptidase LytF (488 aa).

The first 26 residues, 1–26 (MKKKLAAGLTASAIVGTTLVVTPAEA), serve as a signal peptide directing secretion. LysM domains lie at 27–70 (ATIK…TLTI) and 92–135 (SVYT…KLKV). Disordered regions lie at residues 70–93 (IPGS…GSSV), 137–176 (GTVS…TGTY), and 218–239 (KSSG…TSAT). Low complexity-rich tracts occupy residues 72 to 93 (GSKS…GSSV) and 140 to 172 (SSSS…SSSS). A LysM 3 domain is found at 174 to 217 (GTYKVQLGDSLWKIANKVNMSIAELKVLNNLKSDTIYVNQVLKT). Residues 240-283 (TKYTVKSGDSLWKIANNYNLTVQQIRNINNLKSDVLYVGQVLKL) enclose the LysM 4 domain. Residues 286–306 (KASSGSSSSSSSSSNASSGTT) are disordered. In terms of domain architecture, LysM 5 spans 307 to 350 (TTYTVKSGDSLWVIAQKFNVTAQQIREKNNLKTDVLQVGQKLVI). Residues 370 to 488 (SAKINTMISA…QRYLGAKRYF (119 aa)) enclose the NlpC/P60 domain. The active-site Nucleophile is Cys400. His449 (proton acceptor) is an active-site residue. Residue Asn461 is part of the active site.

It belongs to the peptidase C40 family.

It localises to the secreted. The protein resides in the cell wall. Is inhibited in vitro by para-hydroxymercuribenzoate, a sulfydryl inhibitor. Functionally, cell wall hydrolase that cleaves gamma-D-glutamate-meso-diaminopimelate bonds in peptidoglycan. LytF is necessary and sufficient for vegetative daughter cell separation, and also seems to play a role in cell autolysis. In Bacillus subtilis (strain 168), this protein is Peptidoglycan endopeptidase LytF (lytF).